The primary structure comprises 126 residues: Histone H2B 1/2/3/4/6 (126 aa).

Residues 1–12 (MPEPAKSAPAPK) show a composition bias toward low complexity. Residues 1–36 (MPEPAKSAPAPKKGSKKAVTKTQKKGDKKRKKSRKE) are disordered. Lysine 6 and lysine 13 each carry N6-acetyllysine. Residues 13–34 (KGSKKAVTKTQKKGDKKRKKSR) show a composition bias toward basic residues. At serine 15 the chain carries Phosphoserine. 2 positions are modified to N6-acetyllysine: lysine 16 and lysine 21. Lysine 121 participates in a covalent cross-link: Glycyl lysine isopeptide (Lys-Gly) (interchain with G-Cter in ubiquitin).

The protein belongs to the histone H2B family. The nucleosome is a histone octamer containing two molecules each of H2A, H2B, H3 and H4 assembled in one H3-H4 heterotetramer and two H2A-H2B heterodimers. The octamer wraps approximately 147 bp of DNA. In terms of processing, monoubiquitination of Lys-121 by the BRE1 gives a specific tag for epigenetic transcriptional activation and is also prerequisite for histone H3 'Lys-4' and 'Lys-79' methylation. Post-translationally, phosphorylated on Ser-15 during apoptosis; which facilitates apoptotic chromatin condensation.

The protein resides in the nucleus. It is found in the chromosome. In terms of biological role, core component of nucleosome. Nucleosomes wrap and compact DNA into chromatin, limiting DNA accessibility to the cellular machineries which require DNA as a template. Histones thereby play a central role in transcription regulation, DNA repair, DNA replication and chromosomal stability. DNA accessibility is regulated via a complex set of post-translational modifications of histones, also called histone code, and nucleosome remodeling. Its function is as follows. Has broad-spectrum antibacterial activity. May be important in the antimicrobial defenses of chick reproductive system during follicle development in the ovary and egg formation in the oviduct. This Gallus gallus (Chicken) protein is Histone H2B 1/2/3/4/6 (H2B-I).